Consider the following 1021-residue polypeptide: Collagenase ColH (1021 aa).

Positions Met1–Ala30 are cleaved as a signal peptide. A propeptide spanning residues Ala31–Ala40 is cleaved from the precursor. Positions Val41–Asp320 are activator domain. Residues Val41–Leu717 form an S1 metalloprotease domain region. The tract at residues Pro330–Asn601 is catalytic subdomain. Asp421 serves as a coordination point for Zn(2+). Glu430 serves as a coordination point for Ca(2+). Residue His455 participates in Zn(2+) binding. The active site involves Glu456. Zn(2+) is bound at residue His459. Ca(2+) contacts are provided by Gly463, Val467, and Gly469. Zn(2+) is bound at residue Glu487. The helper subdomain stretch occupies residues Asp609–Gly721. An S2a domain region spans residues Pro718–Asp810. Positions 725, 726, 753, 755, 794, 814, 815, 842, 844, 884, 908, 910, 912, 913, 931, 937, 938, and 939 each coordinate Ca(2+). Residues Leu727 to Ile808 form the PKD 1 domain. Residues Leu811–Pro904 are S2b domain. One can recognise a PKD 2 domain in the interval Leu816–Ile905. The segment at Tyr903–Ile922 is disordered. Positions Ile905–Arg1021 are S3 collagen-binding domain. A collagen-binding region spans residues Tyr1002–Phe1004.

It belongs to the peptidase M9B family. Collagenase subfamily. The cofactor is Ca(2+). Zn(2+) serves as cofactor. Post-translationally, upon purification gives rise to 98 kDa, 105 kDa and 116 kDa (full-length) proteins, all of which have the same N-terminus.

It is found in the secreted. The catalysed reaction is Digestion of native collagen in the triple helical region at Xaa-|-Gly bonds. With synthetic peptides, a preference is shown for Gly at P3 and P1', Pro and Ala at P2 and P2', and hydroxyproline, Ala or Arg at P3'.. Inhibited by EDTA. Inhibited by 1-10-phenanthroline. Inhibited by broad-spectrum zinc metalloprotease inhibitor batimastat. N-aryl mercaptoacetamide-based inhibitors have been isolated that act on clostridial collagenases with submicromolar affinity while having negligibile activity on human collagenases. In terms of biological role, clostridial collagenases are among the most efficient degraders of eukaryotic collagen known; saprophytes use collagen as a carbon source while pathogens additionally digest collagen to aid in host colonization. Has both tripeptidylcarboxypeptidase on Gly-X-Y and endopeptidase activities; the endopeptidase cuts within the triple helix region of collagen while tripeptidylcarboxypeptidase successively digests the exposed ends, thus clostridial collagenases can digest large sections of collagen. The full-length protein has collagenase activity, while both the 116 kDa and 98 kDa forms act on gelatin. In vitro digestion of soluble calf skin collagen fibrils requires both ColG and ColH; ColG forms missing the second collagen-binding domain is also synergistic with ColH, although their overall efficiency is decreased. Digestion of collagen requires Ca(2+) and is inhibited by EDTA. The activator domain (residues 119-388) and catalytic subdomain (330-601) open and close around substrate allowing digestion when the protein is closed. The sequence is that of Collagenase ColH from Hathewaya histolytica (Clostridium histolyticum).